Here is a 387-residue protein sequence, read N- to C-terminus: Protein FAM153B (387 aa).

Disordered stretches follow at residues Ser233 to Leu256 and Thr327 to Arg374. The segment covering Ser336–Glu345 has biased composition (low complexity). Basic and acidic residues predominate over residues Ala347–Thr359. Basic residues predominate over residues Arg360 to Arg374.

This sequence belongs to the FAM153 family.

This chain is Protein FAM153B (FAM153B), found in Homo sapiens (Human).